Here is a 1062-residue protein sequence, read N- to C-terminus: 3-hydroxy-3-methylglutaryl-coenzyme A reductase 2 (1062 aa).

Topologically, residues 1–34 (MAPTNTKDSDTPGWLHRHGTSVLGSVARQACKQP) are cytoplasmic. A helical membrane pass occupies residues 35 to 55 (IYTLVITALLATMTYTSLLEG). Residues 56–230 (SLYNANLTRL…SFVGLIKHAQ (175 aa)) lie on the Lumenal side of the membrane. Asn61 carries an N-linked (GlcNAc...) asparagine glycan. A helical transmembrane segment spans residues 231–251 (IIDIIIMLLAYLAMHLTFLSL). The SSD domain occupies 233–403 (DIIIMLLAYL…FTFYISVLCV (171 aa)). The Cytoplasmic portion of the chain corresponds to 252 to 261 (FMSMRQLGSR). A helical membrane pass occupies residues 262–282 (FWLAYSVLLSGFFSLFFGLKV). Over 283–287 (TTSSG) the chain is Lumenal. The helical transmembrane segment at 288–308 (VSTSMITLSECLPILVIIVGF) threads the bilayer. Over 309–355 (EKPIRLTRAVLRAATESYLPAKPMARRSTPEAIEVAIMREGWRIVRD) the chain is Cytoplasmic. The chain crosses the membrane as a helical span at residues 356–375 (YAIEIAILAAGATSRVQGAL). Over 376-377 (PQ) the chain is Lumenal. The chain crosses the membrane as a helical span at residues 378 to 398 (FCFLAAWILLFDSLLLFTFYI). Topologically, residues 399 to 450 (SVLCVKLEITRIRKHVEPRRALEDDDISTGNQDFDSRVFGCKVKAANISRFK) are cytoplasmic. A helical transmembrane segment spans residues 451–471 (FLMVGGFVLFNVLQLSSLTYG). Over 472–564 (NVRVSDWMPY…GCVLAWLEDP (93 aa)) the chain is Lumenal. Asn484 carries N-linked (GlcNAc...) asparagine glycosylation. The chain crosses the membrane as a helical span at residues 565–585 (VISKWVIAALFLSLVLNSYLM). Residues 586 to 1062 (KAARWNLRQS…NRSKVAAKTG (477 aa)) lie on the Cytoplasmic side of the membrane. Catalysis depends on Glu744, which acts as the Charge relay system. CoA is bound at residue 750–756 (SASRGCK). NADP(+) is bound by residues 811-813 (SRF) and 838-846 (DAMGMNMIS). The active-site Charge relay system is the Lys877. Residue 906-908 (VLK) coordinates CoA. The Charge relay system role is filled by Asp953. 1048-1049 (AH) is a CoA binding site. Catalysis depends on His1049, which acts as the Proton donor. 1053-1054 (NR) lines the NADP(+) pocket.

Belongs to the HMG-CoA reductase family.

It localises to the endoplasmic reticulum membrane. The enzyme catalyses (R)-mevalonate + 2 NADP(+) + CoA = (3S)-3-hydroxy-3-methylglutaryl-CoA + 2 NADPH + 2 H(+). Its pathway is metabolic intermediate biosynthesis; (R)-mevalonate biosynthesis; (R)-mevalonate from acetyl-CoA: step 3/3. In terms of biological role, HMG-CoA reductase; part of the first module of ergosterol biosynthesis pathway that includes the early steps of the pathway, conserved across all eukaryotes, and which results in the formation of mevalonate from acetyl-coenzyme A (acetyl-CoA). Hmg1 and hmg2 catalyze the reduction of hydroxymethylglutaryl-CoA (HMG-CoA) to mevalonate. The first module starts with the action of the cytosolic acetyl-CoA acetyltransferase erg10B that catalyzes the formation of acetoacetyl-CoA. The hydroxymethylglutaryl-CoA synthases erg13A and erg13B then condense acetyl-CoA with acetoacetyl-CoA to form HMG-CoA. The rate-limiting step of the early module is the reduction to mevalonate by the 3-hydroxy-3-methylglutaryl-coenzyme A (HMG-CoA) reductases hmg1 and hmg2. Mevalonate is also a precursor for the extracellular siderophore triacetylfusarinine C (TAFC). This chain is 3-hydroxy-3-methylglutaryl-coenzyme A reductase 2, found in Aspergillus fumigatus (strain ATCC MYA-4609 / CBS 101355 / FGSC A1100 / Af293) (Neosartorya fumigata).